A 61-amino-acid chain; its full sequence is Cytotoxin homolog 3 (61 aa).

Disulfide bonds link Cys3–Cys22, Cys15–Cys39, Cys43–Cys54, and Cys55–Cys60.

This sequence belongs to the three-finger toxin family. Short-chain subfamily. Orphan group XV sub-subfamily. Expressed by the venom gland.

It is found in the secreted. The protein localises to the target cell membrane. Functionally, has low cytotoxic activity. In Naja melanoleuca (Forest cobra), this protein is Cytotoxin homolog 3.